The following is a 192-amino-acid chain: Actin, muscle (192 aa).

The protein belongs to the actin family.

It localises to the cytoplasm. The protein resides in the cytoskeleton. It catalyses the reaction ATP + H2O = ADP + phosphate + H(+). Actins are highly conserved proteins that are involved in various types of cell motility and are ubiquitously expressed in all eukaryotic cells. The polypeptide is Actin, muscle (Chionoecetes opilio (Atlantic snow crab)).